The chain runs to 309 residues: Taste receptor type 2 member 20 (309 aa).

Residues 1 to 6 (MMSFLH) lie on the Extracellular side of the membrane. A helical membrane pass occupies residues 7-27 (IVFSILVVVAFILGNFANGFI). Over 28 to 46 (ALINFIAWVKRQKISSADQ) the chain is Cytoplasmic. Residues 47-67 (IIAALAVSRVGLLWVILLHWY) form a helical membrane-spanning segment. The Extracellular segment spans residues 68-79 (STVLNPTSSNLK). A helical transmembrane segment spans residues 80-100 (VIIFISNAWAVTNHFSIWLAT). Over 101–125 (SLSIFYLLKIVNFSRLIFHHLKRKA) the chain is Cytoplasmic. The chain crosses the membrane as a helical span at residues 126-146 (KSVVLVIVLGSLFFLVCHLVM). Topologically, residues 147-178 (KHTYINVWTEECEGNVTWKIKLRNAMHLSNLT) are extracellular. Residues Asn161 and Asn176 are each glycosylated (N-linked (GlcNAc...) asparagine). The helical transmembrane segment at 179 to 199 (VAMLANLIPFTLTLISFLLLI) threads the bilayer. Over 200–229 (YSLCKHLKKMQLHGKGSQDPSTKIHIKALQ) the chain is Cytoplasmic. A helical transmembrane segment spans residues 230-250 (TVTSFLILLAIYFLCLIISFW). The Extracellular portion of the chain corresponds to 251 to 259 (NFKMRPKEI). A helical membrane pass occupies residues 260 to 280 (VLMLCQAFGIIYPSFHSFILI). At 281–309 (WGNKTLKQTFLSVLWQVTCWAKGQNQSTP) the chain is on the cytoplasmic side.

This sequence belongs to the G-protein coupled receptor T2R family. Expressed in subsets of taste receptor cells of the tongue and exclusively in gustducin-positive cells.

It is found in the membrane. Functionally, receptor that may play a role in the perception of bitterness and is gustducin-linked. May play a role in sensing the chemical composition of the gastrointestinal content. The activity of this receptor may stimulate alpha gustducin, mediate PLC-beta-2 activation and lead to the gating of TRPM5. The sequence is that of Taste receptor type 2 member 20 (TAS2R20) from Homo sapiens (Human).